A 273-amino-acid chain; its full sequence is Hydroxyethylthiazole kinase (273 aa).

Substrate is bound at residue Met-49. 2 residues coordinate ATP: Arg-125 and Thr-171. A substrate-binding site is contributed by Gly-198.

The protein belongs to the Thz kinase family. Requires Mg(2+) as cofactor.

It carries out the reaction 5-(2-hydroxyethyl)-4-methylthiazole + ATP = 4-methyl-5-(2-phosphooxyethyl)-thiazole + ADP + H(+). It participates in cofactor biosynthesis; thiamine diphosphate biosynthesis; 4-methyl-5-(2-phosphoethyl)-thiazole from 5-(2-hydroxyethyl)-4-methylthiazole: step 1/1. Functionally, catalyzes the phosphorylation of the hydroxyl group of 4-methyl-5-beta-hydroxyethylthiazole (THZ). In Desulforudis audaxviator (strain MP104C), this protein is Hydroxyethylthiazole kinase.